Here is a 145-residue protein sequence, read N- to C-terminus: Protoporphyrinogen IX oxidase (145 aa).

4 helical membrane-spanning segments follow: residues 6–26, 61–81, 83–103, and 123–143; these read LWFK…LLYL, AMIS…FVAL, TWFQ…GLLA, and IVNE…IVKP. H12 contacts heme. Residue K88 coordinates heme.

Belongs to the HemJ family. Homodimer. It depends on heme b as a cofactor.

Its subcellular location is the cell membrane. It carries out the reaction protoporphyrinogen IX + 3 A = protoporphyrin IX + 3 AH2. The protein operates within porphyrin-containing compound metabolism; protoporphyrin-IX biosynthesis; protoporphyrin-IX from protoporphyrinogen-IX: step 1/1. In terms of biological role, catalyzes the oxidation of protoporphyrinogen IX to protoporphyrin IX. Is involved in the biosynthesis of tetrapyrrole molecules like heme. Does not use oxygen or artificial electron acceptors such as menadione or benzoquinone. This chain is Protoporphyrinogen IX oxidase, found in Rickettsia prowazekii (strain Madrid E).